Consider the following 595-residue polypeptide: Peptidyl-prolyl cis-trans isomerase CYP65 (595 aa).

Residues 35–108 (KSLPYYCCAL…GEYHCPVLNK (74 aa)) form the U-box domain. In terms of domain architecture, PPIase cyclophilin-type spans 342–496 (KKGYVQFQTT…EEIKIIEASV (155 aa)). Disordered regions lie at residues 503-546 (ELDE…GGGG) and 576-595 (SKKR…FSSW). Over residues 510 to 525 (KEKAEKEKNEDKDIEK) the composition is skewed to basic and acidic residues. Over residues 582–595 (TASASTGFKDFSSW) the composition is skewed to polar residues.

This sequence belongs to the cyclophilin-type PPIase family. PPIL2 subfamily. As to expression, expressed in leaves, flower buds and stems. Lower levels of expression in roots.

It localises to the nucleus. It catalyses the reaction [protein]-peptidylproline (omega=180) = [protein]-peptidylproline (omega=0). The enzyme catalyses S-ubiquitinyl-[E2 ubiquitin-conjugating enzyme]-L-cysteine + [acceptor protein]-L-lysine = [E2 ubiquitin-conjugating enzyme]-L-cysteine + N(6)-ubiquitinyl-[acceptor protein]-L-lysine.. The protein operates within protein modification; protein ubiquitination. May catalyze the cis-trans isomerization of proline imidic peptide bonds in oligopeptides thereby assisting the folding of proteins. May also function as a chaperone, playing a role in intracellular transport of proteins. May also have a protein ubiquitin ligase activity acting as an E3 ubiquitin protein ligase or as a ubiquitin-ubiquitin ligase promoting elongation of ubiquitin chains on proteins. The chain is Peptidyl-prolyl cis-trans isomerase CYP65 (CYP65) from Arabidopsis thaliana (Mouse-ear cress).